Here is a 337-residue protein sequence, read N- to C-terminus: F420-dependent glucose-6-phosphate dehydrogenase 2 (337 aa).

Asp-40 serves as a coordination point for coenzyme F420-(gamma-Glu)n. The active-site Proton donor is His-41. Coenzyme F420-(gamma-Glu)n-binding positions include Thr-77 and 108-109 (TG). Glu-110 functions as the Proton acceptor in the catalytic mechanism. Coenzyme F420-(gamma-Glu)n contacts are provided by residues Asn-113, 178–179 (GG), and 181–182 (VV). The substrate site is built by Thr-196, Lys-199, Lys-260, and Arg-284.

It belongs to the F420-dependent glucose-6-phosphate dehydrogenase family. Homodimer.

It carries out the reaction oxidized coenzyme F420-(gamma-L-Glu)(n) + D-glucose 6-phosphate + H(+) = 6-phospho-D-glucono-1,5-lactone + reduced coenzyme F420-(gamma-L-Glu)(n). In terms of biological role, catalyzes the coenzyme F420-dependent oxidation of glucose 6-phosphate (G6P) to 6-phosphogluconolactone. This chain is F420-dependent glucose-6-phosphate dehydrogenase 2, found in Rhodococcus jostii (strain RHA1).